The primary structure comprises 176 residues: UPF0098 protein Rv2140c (176 aa).

An N-acetylthreonine modification is found at threonine 2.

This sequence belongs to the UPF0098 family.

This is UPF0098 protein Rv2140c from Mycobacterium tuberculosis (strain ATCC 25618 / H37Rv).